The chain runs to 305 residues: Protein FdhE homolog (305 aa).

The protein belongs to the FdhE family.

It localises to the cytoplasm. Necessary for formate dehydrogenase activity. This is Protein FdhE homolog from Haemophilus ducreyi (strain 35000HP / ATCC 700724).